The chain runs to 230 residues: Tol-Pal system protein TolQ (230 aa).

3 consecutive transmembrane segments (helical) span residues 16 to 36 (LVKL…AIII), 139 to 159 (YIGL…LGAV), and 171 to 191 (IAEA…AVMA).

It belongs to the ExbB/TolQ family. As to quaternary structure, the Tol-Pal system is composed of five core proteins: the inner membrane proteins TolA, TolQ and TolR, the periplasmic protein TolB and the outer membrane protein Pal. They form a network linking the inner and outer membranes and the peptidoglycan layer.

Its subcellular location is the cell inner membrane. Its function is as follows. Part of the Tol-Pal system, which plays a role in outer membrane invagination during cell division and is important for maintaining outer membrane integrity. Required, with TolR, for the proton motive force-dependent activation of TolA and for TolA-Pal interaction. The polypeptide is Tol-Pal system protein TolQ (Escherichia coli O157:H7).